The following is a 475-amino-acid chain: Ribulose bisphosphate carboxylase large chain (475 aa).

Positions 1 to 2 (MS) are excised as a propeptide. At proline 3 the chain carries N-acetylproline. Lysine 14 is subject to N6,N6,N6-trimethyllysine. Substrate contacts are provided by asparagine 123 and threonine 173. Lysine 175 acts as the Proton acceptor in catalysis. Position 177 (lysine 177) interacts with substrate. Mg(2+) contacts are provided by lysine 201, aspartate 203, and glutamate 204. Lysine 201 is modified (N6-carboxylysine). Histidine 294 acts as the Proton acceptor in catalysis. Positions 295, 327, and 379 each coordinate substrate.

Belongs to the RuBisCO large chain family. Type I subfamily. Heterohexadecamer of 8 large chains and 8 small chains; disulfide-linked. The disulfide link is formed within the large subunit homodimers. Requires Mg(2+) as cofactor. Post-translationally, the disulfide bond which can form in the large chain dimeric partners within the hexadecamer appears to be associated with oxidative stress and protein turnover.

It is found in the plastid. It localises to the chloroplast. The enzyme catalyses 2 (2R)-3-phosphoglycerate + 2 H(+) = D-ribulose 1,5-bisphosphate + CO2 + H2O. It carries out the reaction D-ribulose 1,5-bisphosphate + O2 = 2-phosphoglycolate + (2R)-3-phosphoglycerate + 2 H(+). Functionally, ruBisCO catalyzes two reactions: the carboxylation of D-ribulose 1,5-bisphosphate, the primary event in carbon dioxide fixation, as well as the oxidative fragmentation of the pentose substrate in the photorespiration process. Both reactions occur simultaneously and in competition at the same active site. The protein is Ribulose bisphosphate carboxylase large chain of Keteleeria davidiana (David's keteleeria).